The sequence spans 347 residues: Melanoma-associated antigen B1 (347 aa).

The segment covering 1-17 (MPRGQKSKLRAREKRRK) has biased composition (basic residues). Positions 1 to 104 (MPRGQKSKLR…QATTSTESSV (104 aa)) are disordered. Polar residues-rich tracts occupy residues 39–53 (PSSSPVLGDTPTSSP) and 89–102 (ENASFSQATTSTES). Positions 108 to 307 (VAWEAGMLMH…RDFPSHYEEA (200 aa)) constitute an MAGE domain. Positions 315 to 347 (AQVRSSVRARRRTTATTFRARSRAPFSRSSHPM) are disordered. The segment covering 328–347 (TATTFRARSRAPFSRSSHPM) has biased composition (low complexity).

In terms of tissue distribution, expressed only in testis.

In Homo sapiens (Human), this protein is Melanoma-associated antigen B1 (MAGEB1).